The primary structure comprises 411 residues: Dual-specificity RNA methyltransferase RlmN (411 aa).

The Proton acceptor role is filled by glutamate 125. Residues 131–380 (EEGRGTLCIS…IRTPRGRDIL (250 aa)) form the Radical SAM core domain. A disulfide bridge connects residues cysteine 138 and cysteine 383. Residues cysteine 145, cysteine 149, and cysteine 152 each coordinate [4Fe-4S] cluster. S-adenosyl-L-methionine-binding positions include 209–210 (GE), serine 241, 263–265 (SLH), and asparagine 340. The S-methylcysteine intermediate role is filled by cysteine 383.

Belongs to the radical SAM superfamily. RlmN family. It depends on [4Fe-4S] cluster as a cofactor.

Its subcellular location is the cytoplasm. The catalysed reaction is adenosine(2503) in 23S rRNA + 2 reduced [2Fe-2S]-[ferredoxin] + 2 S-adenosyl-L-methionine = 2-methyladenosine(2503) in 23S rRNA + 5'-deoxyadenosine + L-methionine + 2 oxidized [2Fe-2S]-[ferredoxin] + S-adenosyl-L-homocysteine. It catalyses the reaction adenosine(37) in tRNA + 2 reduced [2Fe-2S]-[ferredoxin] + 2 S-adenosyl-L-methionine = 2-methyladenosine(37) in tRNA + 5'-deoxyadenosine + L-methionine + 2 oxidized [2Fe-2S]-[ferredoxin] + S-adenosyl-L-homocysteine. Functionally, specifically methylates position 2 of adenine 2503 in 23S rRNA and position 2 of adenine 37 in tRNAs. m2A2503 modification seems to play a crucial role in the proofreading step occurring at the peptidyl transferase center and thus would serve to optimize ribosomal fidelity. This chain is Dual-specificity RNA methyltransferase RlmN, found in Brucella canis (strain ATCC 23365 / NCTC 10854 / RM-666).